The chain runs to 355 residues: Peptide chain release factor 1 (355 aa).

Gln233 is modified (N5-methylglutamine).

This sequence belongs to the prokaryotic/mitochondrial release factor family. Post-translationally, methylated by PrmC. Methylation increases the termination efficiency of RF1.

Its subcellular location is the cytoplasm. Its function is as follows. Peptide chain release factor 1 directs the termination of translation in response to the peptide chain termination codons UAG and UAA. This Amoebophilus asiaticus (strain 5a2) protein is Peptide chain release factor 1.